The primary structure comprises 155 residues: Cyanate hydratase (155 aa).

Catalysis depends on residues R95, E98, and S121.

Belongs to the cyanase family.

It catalyses the reaction cyanate + hydrogencarbonate + 3 H(+) = NH4(+) + 2 CO2. In terms of biological role, catalyzes the reaction of cyanate with bicarbonate to produce ammonia and carbon dioxide. The chain is Cyanate hydratase from Pseudomonas syringae pv. tomato (strain ATCC BAA-871 / DC3000).